Consider the following 202-residue polypeptide: LexA repressor (202 aa).

The segment at residues 28 to 48 (RAEIAQQLGFRSPNAAEEHLK) is a DNA-binding region (H-T-H motif). Active-site for autocatalytic cleavage activity residues include S119 and K156.

This sequence belongs to the peptidase S24 family. Homodimer.

It catalyses the reaction Hydrolysis of Ala-|-Gly bond in repressor LexA.. Functionally, represses a number of genes involved in the response to DNA damage (SOS response), including recA and lexA. Binds to the 16 bp palindromic sequence 5'-CTGTATATATATACAG-3'. In the presence of single-stranded DNA, RecA interacts with LexA causing an autocatalytic cleavage which disrupts the DNA-binding part of LexA, leading to derepression of the SOS regulon and eventually DNA repair. In Pectobacterium carotovorum subsp. carotovorum (Erwinia carotovora subsp. carotovora), this protein is LexA repressor.